The chain runs to 1074 residues: Probable phospholipid-transporting ATPase tat-5 (1074 aa).

Residues 1-26 form a disordered region; sequence MGKRKKNDESSSSSSQKPCVSSSSDD. Residues 10–26 are compositionally biased toward low complexity; that stretch reads SSSSSSQKPCVSSSSDD. 4 helical membrane-spanning segments follow: residues 118–138, 143–163, 354–374, and 378–398; these read FVPIVLFQQFKFFLNLYFLLM, FIPAIQIGAPITYWGPLGFVL, LTKLLFCFVLVLSSVMVAMKG, and LWYRYLMRFILLFSYIIPISL. Residue aspartate 442 is the 4-aspartylphosphate intermediate of the active site. Residues aspartate 442, lysine 443, threonine 444, glutamate 524, phenylalanine 570, lysine 575, lysine 594, arginine 623, threonine 624, threonine 704, glycine 705, aspartate 706, arginine 786, and lysine 792 each contribute to the ATP site. Aspartate 442 contacts Mg(2+). Threonine 444 serves as a coordination point for Mg(2+). Aspartate 813 is a binding site for Mg(2+). ATP is bound by residues asparagine 816 and aspartate 817. Aspartate 817 contributes to the Mg(2+) binding site. A run of 5 helical transmembrane segments spans residues 886–906, 954–974, 978–998, 1006–1026, and 1038–1058; these read AIFSCVFYFASVSLYQGVLMV, IWVLISLYQGAVIMYGALLVF, FIHVVSISFSALIVTELIMVA, WAMLLAQALSLGLYMISLILF, and WVFISKTTAITAVSCLPLYIV.

Belongs to the cation transport ATPase (P-type) (TC 3.A.3) family. Type IV subfamily. The cofactor is Mg(2+).

Its subcellular location is the cell membrane. The enzyme catalyses ATP + H2O + phospholipidSide 1 = ADP + phosphate + phospholipidSide 2.. Its function is as follows. Plays a role in regulating membrane trafficking of cargo proteins during embryogenesis. Regulates snx-3 retromer-mediated endosomal sorting of mig-14, a transporter of Wnt egl-20 morphogen. Together with mon-2 and pad-1, may participate in the formation of endosomal carriers that direct mig-14 trafficking back to Golgi, away from lysosomal degradation. Required for Wnt egl-20 gradient formation along the anteroposterior body axis and migration of QL neuroblast descendants toward the posterior part. Maintains phosphatidylethanolamine (PE) asymmetry at the cell membrane and prevents the budding of ectosome vesicles that affect intercellular communication and morphogenesis. This is Probable phospholipid-transporting ATPase tat-5 (tat-5) from Caenorhabditis elegans.